Reading from the N-terminus, the 389-residue chain is S-adenosylmethionine synthase (389 aa).

His17 is a binding site for ATP. Residue Asp19 participates in Mg(2+) binding. Glu45 serves as a coordination point for K(+). Residues Glu58 and Gln101 each coordinate L-methionine. The segment at 101 to 111 (QSPDIGQGVDV) is flexible loop. ATP contacts are provided by residues 160–162 (DGK), 226–227 (RF), Asp235, 241–242 (RK), Ala258, and Lys262. Asp235 provides a ligand contact to L-methionine. Lys266 lines the L-methionine pocket.

This sequence belongs to the AdoMet synthase family. As to quaternary structure, homotetramer; dimer of dimers. Mg(2+) serves as cofactor. K(+) is required as a cofactor.

The protein localises to the cytoplasm. It catalyses the reaction L-methionine + ATP + H2O = S-adenosyl-L-methionine + phosphate + diphosphate. The protein operates within amino-acid biosynthesis; S-adenosyl-L-methionine biosynthesis; S-adenosyl-L-methionine from L-methionine: step 1/1. In terms of biological role, catalyzes the formation of S-adenosylmethionine (AdoMet) from methionine and ATP. The overall synthetic reaction is composed of two sequential steps, AdoMet formation and the subsequent tripolyphosphate hydrolysis which occurs prior to release of AdoMet from the enzyme. This Anaeromyxobacter sp. (strain Fw109-5) protein is S-adenosylmethionine synthase.